A 201-amino-acid chain; its full sequence is 3-isopropylmalate dehydratase small subunit (201 aa).

It belongs to the LeuD family. LeuD type 1 subfamily. In terms of assembly, heterodimer of LeuC and LeuD.

It carries out the reaction (2R,3S)-3-isopropylmalate = (2S)-2-isopropylmalate. Its pathway is amino-acid biosynthesis; L-leucine biosynthesis; L-leucine from 3-methyl-2-oxobutanoate: step 2/4. Catalyzes the isomerization between 2-isopropylmalate and 3-isopropylmalate, via the formation of 2-isopropylmaleate. The polypeptide is 3-isopropylmalate dehydratase small subunit (Cronobacter sakazakii (strain ATCC BAA-894) (Enterobacter sakazakii)).